A 143-amino-acid polypeptide reads, in one-letter code: Nucleoside diphosphate kinase (143 aa).

ATP contacts are provided by K11, F59, R87, T93, R104, and N114. H117 (pros-phosphohistidine intermediate) is an active-site residue.

This sequence belongs to the NDK family. Homotetramer. Requires Mg(2+) as cofactor.

Its subcellular location is the cytoplasm. It catalyses the reaction a 2'-deoxyribonucleoside 5'-diphosphate + ATP = a 2'-deoxyribonucleoside 5'-triphosphate + ADP. The catalysed reaction is a ribonucleoside 5'-diphosphate + ATP = a ribonucleoside 5'-triphosphate + ADP. Its function is as follows. Major role in the synthesis of nucleoside triphosphates other than ATP. The ATP gamma phosphate is transferred to the NDP beta phosphate via a ping-pong mechanism, using a phosphorylated active-site intermediate. This is Nucleoside diphosphate kinase from Clostridium perfringens (strain SM101 / Type A).